Reading from the N-terminus, the 530-residue chain is Cytochrome P450 2U1 (530 aa).

4 helical membrane passes run 21-41 (VRAT…GWVW), 99-119 (VYGN…LSDF), 247-267 (ICLH…YLPF), and 328-348 (LFYI…NSLL). C476 is a binding site for heme. A helical membrane pass occupies residues 481–501 (LAKMELFLMFVSLMQTFTFAL).

The protein belongs to the cytochrome P450 family. It depends on heme as a cofactor. Widely expressed. Expressed in heart, brain and liver.

It localises to the endoplasmic reticulum membrane. The protein resides in the microsome membrane. Its subcellular location is the mitochondrion inner membrane. The catalysed reaction is an omega-methyl-long-chain fatty acid + reduced [NADPH--hemoprotein reductase] + O2 = an omega-hydroxy-long-chain fatty acid + oxidized [NADPH--hemoprotein reductase] + H2O + H(+). The enzyme catalyses (5Z,8Z,11Z,14Z)-eicosatetraenoate + reduced [NADPH--hemoprotein reductase] + O2 = 19-hydroxy-(5Z,8Z,11Z,14Z)-eicosatetraenoate + oxidized [NADPH--hemoprotein reductase] + H2O + H(+). It carries out the reaction (5Z,8Z,11Z,14Z)-eicosatetraenoate + reduced [NADPH--hemoprotein reductase] + O2 = 20-hydroxy-(5Z,8Z,11Z,14Z)-eicosatetraenoate + oxidized [NADPH--hemoprotein reductase] + H2O + H(+). It catalyses the reaction N-[(5Z,8Z,11Z,14Z)-eicosatetraenoyl]-serotonin + reduced [NADPH--hemoprotein reductase] + O2 = 2-oxo-N-[(5Z,8Z,11Z,14Z)-eicosatetraenoyl]-serotonin + oxidized [NADPH--hemoprotein reductase] + H2O + H(+). Its function is as follows. A cytochrome P450 monooxygenase involved in the metabolism of arachidonic acid and its conjugates. Mechanistically, uses molecular oxygen inserting one oxygen atom into a substrate, and reducing the second into a water molecule, with two electrons provided by NADPH via cytochrome P450 reductase (CPR; NADPH-ferrihemoprotein reductase). Acts as an omega and omega-1 hydroxylase for arachidonic acid and possibly for other long chain fatty acids. May modulate the arachidonic acid signaling pathway and play a role in other fatty acid signaling processes. May down-regulate the biological activities of N-arachidonoyl-serotonin, an endocannabinoid that has anti-nociceptive effects through inhibition of fatty acid amide hydrolase FAAH, TRPV1 receptor and T-type calcium channels. Catalyzes C-2 oxidation of the indole ring of N-arachidonoyl-serotonin forming a less active product 2-oxo-N-arachidonoyl-serotonin. The chain is Cytochrome P450 2U1 from Mus musculus (Mouse).